The primary structure comprises 129 residues: L-ectoine synthase (129 aa).

It belongs to the ectoine synthase family.

The enzyme catalyses (2S)-4-acetamido-2-aminobutanoate = L-ectoine + H2O. Its pathway is amine and polyamine biosynthesis; ectoine biosynthesis; L-ectoine from L-aspartate 4-semialdehyde: step 3/3. Functionally, catalyzes the circularization of gamma-N-acetyl-alpha,gamma-diaminobutyric acid (ADABA) to ectoine (1,4,5,6-tetrahydro-2-methyl-4-pyrimidine carboxylic acid), which is an excellent osmoprotectant. This Halalkalibacterium halodurans (strain ATCC BAA-125 / DSM 18197 / FERM 7344 / JCM 9153 / C-125) (Bacillus halodurans) protein is L-ectoine synthase.